The following is a 343-amino-acid chain: S-adenosylmethionine:tRNA ribosyltransferase-isomerase (343 aa).

This sequence belongs to the QueA family. In terms of assembly, monomer.

The protein localises to the cytoplasm. It carries out the reaction 7-aminomethyl-7-carbaguanosine(34) in tRNA + S-adenosyl-L-methionine = epoxyqueuosine(34) in tRNA + adenine + L-methionine + 2 H(+). It functions in the pathway tRNA modification; tRNA-queuosine biosynthesis. In terms of biological role, transfers and isomerizes the ribose moiety from AdoMet to the 7-aminomethyl group of 7-deazaguanine (preQ1-tRNA) to give epoxyqueuosine (oQ-tRNA). The protein is S-adenosylmethionine:tRNA ribosyltransferase-isomerase of Coxiella burnetii (strain CbuG_Q212) (Coxiella burnetii (strain Q212)).